Consider the following 239-residue polypeptide: Guanylate kinase (239 aa).

The Guanylate kinase-like domain occupies 19 to 197 (GLLIVVTGAS…AVSELLAVQQ (179 aa)). 26-33 (GASGVGKG) contacts ATP.

Belongs to the guanylate kinase family.

The protein resides in the cytoplasm. The enzyme catalyses GMP + ATP = GDP + ADP. Functionally, essential for recycling GMP and indirectly, cGMP. The chain is Guanylate kinase (gmk) from Deinococcus radiodurans (strain ATCC 13939 / DSM 20539 / JCM 16871 / CCUG 27074 / LMG 4051 / NBRC 15346 / NCIMB 9279 / VKM B-1422 / R1).